We begin with the raw amino-acid sequence, 227 residues long: Cytidylate kinase (227 aa).

An ATP-binding site is contributed by 12–20 (GPSGSGKGT).

This sequence belongs to the cytidylate kinase family. Type 1 subfamily.

The protein resides in the cytoplasm. It carries out the reaction CMP + ATP = CDP + ADP. The enzyme catalyses dCMP + ATP = dCDP + ADP. The chain is Cytidylate kinase from Nitrosococcus oceani (strain ATCC 19707 / BCRC 17464 / JCM 30415 / NCIMB 11848 / C-107).